The following is a 221-amino-acid chain: Small ribosomal subunit protein uS2 (221 aa).

The segment at 202 to 221 (KVKMPQQNQRGRPQRRFQRR) is disordered.

It belongs to the universal ribosomal protein uS2 family.

This is Small ribosomal subunit protein uS2 from Methanococcus vannielii (strain ATCC 35089 / DSM 1224 / JCM 13029 / OCM 148 / SB).